The primary structure comprises 339 residues: Serpentine receptor class delta-19 (339 aa).

7 helical membrane passes run 2-22 (IIFFEIWHWSWALLGCYLNLL), 39-59 (ATLIINFAATDFVECALDLFI), 90-110 (VGLSFLLHCLTHSVWSLLISF), 130-150 (ITIMFYIPSLVQALTYWTLFV), 187-207 (VYAVAHICLPFFPVYITIFVL), 242-262 (IIPMFLGIAVLLYFSSQSGLL), and 270-290 (SIFSVAILMPALSPITYLYFV).

It belongs to the nematode receptor-like protein srd family.

The protein resides in the membrane. In Caenorhabditis elegans, this protein is Serpentine receptor class delta-19 (srd-19).